A 143-amino-acid polypeptide reads, in one-letter code: Ribosome-binding factor A (143 aa).

A disordered region spans residues 119-143 (KAKQQQFTPDTPDNSESVDGEKEQD). Positions 122–133 (QQQFTPDTPDNS) are enriched in polar residues.

This sequence belongs to the RbfA family. As to quaternary structure, monomer. Binds 30S ribosomal subunits, but not 50S ribosomal subunits or 70S ribosomes.

It is found in the cytoplasm. Its function is as follows. One of several proteins that assist in the late maturation steps of the functional core of the 30S ribosomal subunit. Associates with free 30S ribosomal subunits (but not with 30S subunits that are part of 70S ribosomes or polysomes). Required for efficient processing of 16S rRNA. May interact with the 5'-terminal helix region of 16S rRNA. The protein is Ribosome-binding factor A of Shewanella frigidimarina (strain NCIMB 400).